The following is a 1483-amino-acid chain: Dynein axonemal assembly factor 1 homolog (1483 aa).

6 LRR repeats span residues 34-56 (RLND…EEYT), 57-78 (ELKC…EKLS), 79-100 (KLKC…DPCR), 101-122 (ELDT…GTNV), 125-146 (VLNT…SDLI), and 150-171 (TLSV…KIFE). The LRRCT domain maps to 185–223 (PVVSRLPQYRKTLILACKELTYLDSRPVFPRDRACAEAW). 4 disordered regions span residues 249-282 (SINC…TCAE), 300-327 (EEVS…GTSS), 945-986 (DSGD…HGTK), and 1167-1213 (SENE…SIDD). Polar residues predominate over residues 311–327 (DGTNSSSSLEDNDGTSS). Positions 1183-1196 (TNDKESSDIMEKNG) are enriched in basic and acidic residues.

It belongs to the DNAAF1 family.

The protein resides in the cell projection. It is found in the cilium. Functionally, cilium-specific protein required for cilia structures. This is Dynein axonemal assembly factor 1 homolog (dtr) from Drosophila melanogaster (Fruit fly).